An 873-amino-acid chain; its full sequence is Outer membrane usher protein FimC (873 aa).

The first 15 residues, 1–15 (MKQIPLILAMSLAFA), serve as a signal peptide directing secretion. An intrachain disulfide couples Cys815 to Cys838.

Belongs to the fimbrial export usher family.

The protein resides in the cell outer membrane. In terms of biological role, probable porin-like protein necessary for the assembly of a pilin-type protein. The polypeptide is Outer membrane usher protein FimC (fimC) (Bordetella pertussis (strain Tohama I / ATCC BAA-589 / NCTC 13251)).